Here is a 376-residue protein sequence, read N- to C-terminus: Succinyl-diaminopimelate desuccinylase 1 (376 aa).

Position 67 (H67) interacts with Zn(2+). D69 is an active-site residue. A Zn(2+)-binding site is contributed by D100. E134 acts as the Proton acceptor in catalysis. Residues E135, E163, and H349 each contribute to the Zn(2+) site.

The protein belongs to the peptidase M20A family. DapE subfamily. In terms of assembly, homodimer. Zn(2+) serves as cofactor. It depends on Co(2+) as a cofactor.

The enzyme catalyses N-succinyl-(2S,6S)-2,6-diaminopimelate + H2O = (2S,6S)-2,6-diaminopimelate + succinate. The protein operates within amino-acid biosynthesis; L-lysine biosynthesis via DAP pathway; LL-2,6-diaminopimelate from (S)-tetrahydrodipicolinate (succinylase route): step 3/3. In terms of biological role, catalyzes the hydrolysis of N-succinyl-L,L-diaminopimelic acid (SDAP), forming succinate and LL-2,6-diaminopimelate (DAP), an intermediate involved in the bacterial biosynthesis of lysine and meso-diaminopimelic acid, an essential component of bacterial cell walls. The chain is Succinyl-diaminopimelate desuccinylase 1 from Shewanella loihica (strain ATCC BAA-1088 / PV-4).